Consider the following 121-residue polypeptide: Phospholipase A2 homolog EPL_00195 (121 aa).

7 disulfide bridges follow: cysteine 25–cysteine 114, cysteine 27–cysteine 43, cysteine 42–cysteine 94, cysteine 48–cysteine 121, cysteine 49–cysteine 87, cysteine 56–cysteine 80, and cysteine 74–cysteine 85. The interval 104–116 (KKYRIYPNFLCRG) is important for membrane-damaging activities in eukaryotes and bacteria; heparin-binding.

This sequence belongs to the phospholipase A2 family. Group II subfamily. S49 sub-subfamily. Monomer. Expressed by the venom gland.

It localises to the secreted. Its function is as follows. Snake venom phospholipase A2 homolog that lacks enzymatic activity. Shows high myotoxin activities and displays edema-inducing activities. Has cytotoxic activities against HUVEC cells (LC(50)=2.5 uL) and human lung adenocarcinoma A549 cells (LC(50)=2.9 uL). In Echis pyramidum leakeyi (Leakey's carpet viper), this protein is Phospholipase A2 homolog EPL_00195.